A 371-amino-acid polypeptide reads, in one-letter code: Peptide chain release factor 2 (371 aa).

Gln253 is modified (N5-methylglutamine).

This sequence belongs to the prokaryotic/mitochondrial release factor family. In terms of processing, methylated by PrmC. Methylation increases the termination efficiency of RF2.

It is found in the cytoplasm. Functionally, peptide chain release factor 2 directs the termination of translation in response to the peptide chain termination codons UGA and UAA. This Mycobacterium marinum (strain ATCC BAA-535 / M) protein is Peptide chain release factor 2.